The primary structure comprises 112 residues: Ribonuclease P protein component (112 aa).

This sequence belongs to the RnpA family. As to quaternary structure, consists of a catalytic RNA component (M1 or rnpB) and a protein subunit.

The enzyme catalyses Endonucleolytic cleavage of RNA, removing 5'-extranucleotides from tRNA precursor.. Functionally, RNaseP catalyzes the removal of the 5'-leader sequence from pre-tRNA to produce the mature 5'-terminus. It can also cleave other RNA substrates such as 4.5S RNA. The protein component plays an auxiliary but essential role in vivo by binding to the 5'-leader sequence and broadening the substrate specificity of the ribozyme. The sequence is that of Ribonuclease P protein component from Clostridium kluyveri (strain ATCC 8527 / DSM 555 / NBRC 12016 / NCIMB 10680 / K1).